Here is a 159-residue protein sequence, read N- to C-terminus: Ribosomal RNA large subunit methyltransferase H (159 aa).

Residues leucine 76 and glycine 108 each contribute to the S-adenosyl-L-methionine site.

Belongs to the RNA methyltransferase RlmH family. In terms of assembly, homodimer.

The protein localises to the cytoplasm. It catalyses the reaction pseudouridine(1915) in 23S rRNA + S-adenosyl-L-methionine = N(3)-methylpseudouridine(1915) in 23S rRNA + S-adenosyl-L-homocysteine + H(+). Functionally, specifically methylates the pseudouridine at position 1915 (m3Psi1915) in 23S rRNA. The chain is Ribosomal RNA large subunit methyltransferase H from Natranaerobius thermophilus (strain ATCC BAA-1301 / DSM 18059 / JW/NM-WN-LF).